The chain runs to 513 residues: NAD(P)H-quinone oxidoreductase subunit 2 (513 aa).

Helical transmembrane passes span threonine 12–isoleucine 32, leucine 41–isoleucine 61, leucine 77–valine 97, serine 104–leucine 124, methionine 130–tyrosine 150, leucine 165–phenylalanine 185, isoleucine 199–phenylalanine 219, proline 238–isoleucine 258, tryptophan 272–isoleucine 292, methionine 300–threonine 320, isoleucine 328–phenylalanine 348, leucine 372–glycine 392, leucine 394–valine 414, and alanine 456–isoleucine 476. The segment covering threonine 494–alanine 505 has biased composition (polar residues). The disordered stretch occupies residues threonine 494–arginine 513.

Belongs to the complex I subunit 2 family. As to quaternary structure, NDH-1 can be composed of about 15 different subunits; different subcomplexes with different compositions have been identified which probably have different functions.

The protein resides in the cell inner membrane. The catalysed reaction is a plastoquinone + NADH + (n+1) H(+)(in) = a plastoquinol + NAD(+) + n H(+)(out). It catalyses the reaction a plastoquinone + NADPH + (n+1) H(+)(in) = a plastoquinol + NADP(+) + n H(+)(out). NDH-1 shuttles electrons from an unknown electron donor, via FMN and iron-sulfur (Fe-S) centers, to quinones in the respiratory and/or the photosynthetic chain. The immediate electron acceptor for the enzyme in this species is believed to be plastoquinone. Couples the redox reaction to proton translocation, and thus conserves the redox energy in a proton gradient. Cyanobacterial NDH-1 also plays a role in inorganic carbon-concentration. The protein is NAD(P)H-quinone oxidoreductase subunit 2 of Gloeobacter violaceus (strain ATCC 29082 / PCC 7421).